Here is a 356-residue protein sequence, read N- to C-terminus: Septin-12 (356 aa).

Positions 1–23 (MDERRTPSPCSSRPSSPRTPPCE) are disordered. Residues 7 to 16 (PSPCSSRPSS) are compositionally biased toward low complexity. In terms of domain architecture, Septin-type G spans 44 to 315 (TGFEFNIMVV…ENYRVLRLNE (272 aa)). The interval 44–317 (TGFEFNIMVV…YRVLRLNESH (274 aa)) is interaction with SEPTIN7. Positions 54–61 (GQSGLGKS) are G1 motif. GTP contacts are provided by residues 54 to 61 (GQSGLGKS), threonine 87, glycine 113, 193 to 201 (RADSLTIEE), glycine 249, and arginine 264. The segment at 110–113 (DTPG) is G3 motif. The G4 motif stretch occupies residues 192–195 (ARAD). The self-association (via N-terminus) to polymerize octameric septin 12-7-6-2/4-2/4-6-7-12 filaments stretch occupies residues 256 to 356 (VNGRCVLGRK…RSKDPRDDEC (101 aa)). The interval 330–356 (PASPGQLMAPGPEKVRKRSKDPRDDEC) is disordered.

This sequence belongs to the TRAFAC class TrmE-Era-EngA-EngB-Septin-like GTPase superfamily. Septin GTPase family. In terms of assembly, septins polymerize into heterooligomeric protein complexes that form filaments, and can associate with cellular membranes, actin filaments and microtubules. GTPase activity is required for filament formation. Interacts with SEPTIN6 and SEPTIN11. Self-associates. Component of a octameric complex consisting of SEPTIN12, SEPTIN7, SEPTIN6 and SEPTIN2 or SEPTIN4 in the order 12-7-6-2-2-6-7-12 or 12-7-6-4-4-6-7-12 and located in the sperm annulus; the octamer polymerizes into filaments via the SEPTIN12 N- and C-termini; the SEPTIN12:SEPTIN7 association is mediated by the GTP-binding domains. Interacts with SPAG4 and LMNB1. Associates with alpha- and beta-tubulins. As to expression, predominantly expressed in testis and epididymis. Component of the sperm tail annulus (at protein level).

The protein localises to the cytoplasm. It is found in the cytoskeleton. The protein resides in the spindle. It localises to the cell projection. Its subcellular location is the cilium. The protein localises to the flagellum. Its function is as follows. Filament-forming cytoskeletal GTPase. May play a role in cytokinesis (Potential). Involved in spermatogenesis. Involved in the morphogenesis of sperm heads and the elongation of sperm tails probably implicating the association with alpha- and beta-tubulins. Forms a filamentous structure with SEPTIN7, SEPTIN6, SEPTIN2 and probably SEPTIN4 at the sperm annulus which is required for the structural integrity and motility of the sperm tail during postmeiotic differentiation. In Rattus norvegicus (Rat), this protein is Septin-12.